We begin with the raw amino-acid sequence, 373 residues long: MGLDLARATRPLPELALAYFPNARSVDSDRDPGAGAVQCGDVAEVCSVTNDPDHGHIPVLLDRCVELLAPALTRTDPDGTEAVLVDATLGAGGHSERFLTDFPALRLIGLDRDPNALAIAGDRLAPFGDRVTLVRTRYDGITSALAEAGVRRIDGVLFDLGVSSMQLDQKQRGFSYSADAPLDMRMDPDALLTAAEIVNTYDAKTLTRILRDYGEERFAGRIADKIVRRRAKQPFTTTSELVELLYEAIPAPARRTGGHPAKRTFQALRIAVNAELDSLRAAIPAALAALRPGGRIVVMAYQSLEDRIVKQAFSTVTASRTPPGLPMELPGHEPEFVAVTRGAERADEQEIERNPRSAPVRLRALEKVGGRGS.

S-adenosyl-L-methionine-binding positions include 92–94 (GGH), Asp111, Tyr138, Asp159, and Gln166. Basic and acidic residues-rich tracts occupy residues 343–355 (AERA…ERNP) and 363–373 (RALEKVGGRGS). The interval 343–373 (AERADEQEIERNPRSAPVRLRALEKVGGRGS) is disordered.

This sequence belongs to the methyltransferase superfamily. RsmH family.

The protein resides in the cytoplasm. It carries out the reaction cytidine(1402) in 16S rRNA + S-adenosyl-L-methionine = N(4)-methylcytidine(1402) in 16S rRNA + S-adenosyl-L-homocysteine + H(+). Its function is as follows. Specifically methylates the N4 position of cytidine in position 1402 (C1402) of 16S rRNA. The polypeptide is Ribosomal RNA small subunit methyltransferase H (Mycolicibacterium smegmatis (strain ATCC 700084 / mc(2)155) (Mycobacterium smegmatis)).